A 264-amino-acid chain; its full sequence is Ferric siderophore reductase (264 aa).

In terms of domain architecture, FAD-binding FR-type spans 9–127; it reads SPTRLTYISD…PGPLKMNRFD (119 aa). Residues Arg-73, Ser-74, Thr-76, Asp-90, Val-92, His-96, Ala-100, Thr-101, Lys-247, Asn-249, Thr-250, and Ala-252 each contribute to the FAD site.

The protein belongs to the SIP oxidoreductase family. FAD is required as a cofactor.

Ferric-siderophore reductase involved in iron removal from the siderophores after their transport into the cell. Catalyzes the reduction of the ferric iron bound to the hydroxamate siderophores produced by Shewanella to ferrous iron. Can use a ferredoxin as electron donor. Despite the clear evidence for the interaction with NAD(P)H, no direct reduction of the enzyme by these compounds is observed, nor consumption of NAD(P)H, suggesting that NADH and NADPH are not the physiological electron donors. In Shewanella frigidimarina (strain NCIMB 400), this protein is Ferric siderophore reductase.